Here is a 537-residue protein sequence, read N- to C-terminus: Phosphoenolpyruvate carboxykinase (ATP) (537 aa).

The substrate site is built by R61, Y194, and K200. ATP contacts are provided by residues K200, H219, and G235–T243. 2 residues coordinate Mn(2+): K200 and H219. D256 is a Mn(2+) binding site. E284, R322, and T448 together coordinate ATP. R322 is a binding site for substrate.

The protein belongs to the phosphoenolpyruvate carboxykinase (ATP) family. Requires Mn(2+) as cofactor.

The protein resides in the cytoplasm. It catalyses the reaction oxaloacetate + ATP = phosphoenolpyruvate + ADP + CO2. The protein operates within carbohydrate biosynthesis; gluconeogenesis. Its function is as follows. Involved in the gluconeogenesis. Catalyzes the conversion of oxaloacetate (OAA) to phosphoenolpyruvate (PEP) through direct phosphoryl transfer between the nucleoside triphosphate and OAA. The sequence is that of Phosphoenolpyruvate carboxykinase (ATP) from Bradyrhizobium sp. (strain ORS 278).